The chain runs to 393 residues: Riboflavin biosynthesis protein RibBA (393 aa).

Residues 1-200 (MQFDTIELAI…IKSLVAFRKA (200 aa)) form a DHBP synthase region. D-ribulose 5-phosphate-binding positions include 27–28 (RE), aspartate 32, 139–143 (RNGHT), and glutamate 163. Glutamate 28 lines the Mg(2+) pocket. Residue histidine 142 participates in Mg(2+) binding. Residues 201–393 (VELNVNLKAK…TKKNKMGHLI (193 aa)) are GTP cyclohydrolase II. 249–253 (RMHSA) is a GTP binding site. Zn(2+)-binding residues include cysteine 254, cysteine 265, and cysteine 267. GTP-binding positions include glutamine 270, 291-293 (EGR), and threonine 313. Aspartate 325 serves as the catalytic Proton acceptor; for GTP cyclohydrolase activity. The active-site Nucleophile; for GTP cyclohydrolase activity is arginine 327. 2 residues coordinate GTP: serine 348 and lysine 353.

The protein in the N-terminal section; belongs to the DHBP synthase family. This sequence in the C-terminal section; belongs to the GTP cyclohydrolase II family. Mg(2+) serves as cofactor. It depends on Mn(2+) as a cofactor. Requires Zn(2+) as cofactor.

The catalysed reaction is D-ribulose 5-phosphate = (2S)-2-hydroxy-3-oxobutyl phosphate + formate + H(+). The enzyme catalyses GTP + 4 H2O = 2,5-diamino-6-hydroxy-4-(5-phosphoribosylamino)-pyrimidine + formate + 2 phosphate + 3 H(+). It participates in cofactor biosynthesis; riboflavin biosynthesis; 2-hydroxy-3-oxobutyl phosphate from D-ribulose 5-phosphate: step 1/1. It functions in the pathway cofactor biosynthesis; riboflavin biosynthesis; 5-amino-6-(D-ribitylamino)uracil from GTP: step 1/4. In terms of biological role, catalyzes the conversion of D-ribulose 5-phosphate to formate and 3,4-dihydroxy-2-butanone 4-phosphate. Its function is as follows. Catalyzes the conversion of GTP to 2,5-diamino-6-ribosylamino-4(3H)-pyrimidinone 5'-phosphate (DARP), formate and pyrophosphate. The chain is Riboflavin biosynthesis protein RibBA from Staphylococcus epidermidis (strain ATCC 35984 / DSM 28319 / BCRC 17069 / CCUG 31568 / BM 3577 / RP62A).